The chain runs to 396 residues: Elongation factor Tu (396 aa).

The tr-type G domain maps to 10 to 206 (KPHCNIGTIG…AVDAYIPQPE (197 aa)). A G1 region spans residues 19–26 (GHVDHGKT). 19–26 (GHVDHGKT) lines the GTP pocket. Threonine 26 serves as a coordination point for Mg(2+). Residues 60–64 (GITIS) form a G2 region. Residues 81 to 84 (DCPG) are G3. GTP is bound by residues 81–85 (DCPGH) and 136–139 (NKVD). The tract at residues 136–139 (NKVD) is G4. Residues 174 to 176 (SAL) are G5.

This sequence belongs to the TRAFAC class translation factor GTPase superfamily. Classic translation factor GTPase family. EF-Tu/EF-1A subfamily. In terms of assembly, monomer.

Its subcellular location is the cytoplasm. It carries out the reaction GTP + H2O = GDP + phosphate + H(+). GTP hydrolase that promotes the GTP-dependent binding of aminoacyl-tRNA to the A-site of ribosomes during protein biosynthesis. The polypeptide is Elongation factor Tu (Parvibaculum lavamentivorans (strain DS-1 / DSM 13023 / NCIMB 13966)).